The sequence spans 236 residues: Large ribosomal subunit protein uL3 (236 aa).

It belongs to the universal ribosomal protein uL3 family. As to quaternary structure, part of the 50S ribosomal subunit. Forms a cluster with proteins L14 and L19.

Functionally, one of the primary rRNA binding proteins, it binds directly near the 3'-end of the 23S rRNA, where it nucleates assembly of the 50S subunit. This Mycoplasmoides gallisepticum (strain R(low / passage 15 / clone 2)) (Mycoplasma gallisepticum) protein is Large ribosomal subunit protein uL3.